The following is a 503-amino-acid chain: MTDKLSKYIITVFGASGDLSKKKTFPAIFGLFKQGEISKDECKIVGYARSKMNDEELRDRLKPFLLKQVSKESNGEKIVDEFLSNVTYVQGPYDTDEGYQKLGEAYKEIEKSLNKGSPVNKLHYLALPPSVFGSVCEKIKNNIYVNEDDAKTKIIVEKPFGHDLESSRQLQKELAPLFTEDELYRIDHYLGKEMVKNLLILRFGNILFNSAWNKENIQNIQITFKEPFGTEGRGGYFNDIGIIRDVMQNHLLQVLTLLTMERPVTFDSEAVRDEKVKVLKAIAPIDHDDIIIGQYGKSXDGSKPSYLDDETVPEGSKCITFAAMNFQIRNERWDGVPIVMKAGKALDVGKVEIRIQFKPVASGMFSQIPNNELVIRIQPDEAVYLKCNMKTPGLSTTTKITDLNLTYADRYEDFWIPQAYEALIRDALIGDHSNFVRDDELDVSWALFTPLLDYLEGENAPEPTIYAYGSRGPVELNXYMHXHNYKYMHGDIYQWPVTRPDSE.

Residues 14-21 (GASGDLSK), Arg49, and Lys158 each bind NADP(+). D-glucose 6-phosphate is bound by residues Lys158, 188–192 (HYLGK), Glu226, and Asp245. His250 functions as the Proton acceptor in the catalytic mechanism. Lys341 is an NADP(+) binding site. Lys344 is a D-glucose 6-phosphate binding site. The NADP(+) site is built by Lys350, Arg354, and Arg376. D-glucose 6-phosphate is bound at residue Gln378. NADP(+) is bound by residues 384–386 (YLK), Arg471, and Tyr487.

It belongs to the glucose-6-phosphate dehydrogenase family.

It carries out the reaction D-glucose 6-phosphate + NADP(+) = 6-phospho-D-glucono-1,5-lactone + NADPH + H(+). It functions in the pathway carbohydrate degradation; pentose phosphate pathway; D-ribulose 5-phosphate from D-glucose 6-phosphate (oxidative stage): step 1/3. Its function is as follows. Catalyzes the rate-limiting step of the oxidative pentose-phosphate pathway, which represents a route for the dissimilation of carbohydrates besides glycolysis. The main function of this enzyme is to provide reducing power (NADPH) and pentose phosphates for fatty acid and nucleic acid synthesis. The G6PDH activity is required to cope with hydrogen peroxide and potassium bisulfite stresses and plays a role in adaptation to conditions used in wine fermentations. The polypeptide is Glucose-6-phosphate 1-dehydrogenase (Hanseniaspora uvarum (Yeast)).